Reading from the N-terminus, the 207-residue chain is Claudin-11 (207 aa).

A topological domain (cytoplasmic) is located at residue Met1. The helical transmembrane segment at 2–22 (VATCLQVVGFVTSFVGWIGII) threads the bilayer. Residues 23–82 (VTTSTNDWVVTCSYTIPTCRKMDELGSKGLWADCVMATGLYHCKPLVDILILPGYVQACR) lie on the Extracellular side of the membrane. The helical transmembrane segment at 83 to 103 (ALMIAASVLGLPAILLLLTVL) threads the bilayer. At 104-122 (PCIRMGHEPGVAKYRRAQL) the chain is on the cytoplasmic side. Residues 123 to 143 (AGVLLILLALCAIVATIWFPV) traverse the membrane as a helical segment. At 144–157 (CAHREITIVSFGYS) the chain is on the extracellular side. The helical transmembrane segment at 158–178 (LYAGWIGAVMCLVGGCVIVCC) threads the bilayer. Topologically, residues 179–207 (SGDAQSFGENRFYYSSGSSSPTHAKSAHV) are cytoplasmic. Residues Ser193, Ser194, Ser197, and Ser198 each carry the phosphoserine modification.

Belongs to the claudin family. Interacts with tetraspanin-3/TSPAN3. Interacts with OCLN.

The protein localises to the cell junction. Its subcellular location is the tight junction. It localises to the cell membrane. Its function is as follows. Plays a major role in tight junction-specific obliteration of the intercellular space, through calcium-independent cell-adhesion activity. This is Claudin-11 (Cldn11) from Mus musculus (Mouse).